The primary structure comprises 198 residues: MMYYCGIDEAGFGAGAAQVYVSACVLDPQKPINESLTDSKQLTPKKRELLAEEIKQDALTWCIATASVEEIEKLNIRKATILAMKRSLEGLTVKPDMVYIDGINSPEVPFPVETVVKGDSKIPAISAASILAKVARDNRMLEYDEQYPEYGFKDHKGYLTKNHIKAIQKYGPSPIHRKTYKPIKKIIDNQKNQQLELF.

Residues 2 to 192 (MYYCGIDEAG…IKKIIDNQKN (191 aa)) enclose the RNase H type-2 domain. A divalent metal cation is bound by residues Asp8, Glu9, and Asp101.

It belongs to the RNase HII family. It depends on Mn(2+) as a cofactor. Mg(2+) is required as a cofactor.

Its subcellular location is the cytoplasm. The catalysed reaction is Endonucleolytic cleavage to 5'-phosphomonoester.. Endonuclease that specifically degrades the RNA of RNA-DNA hybrids. The sequence is that of Ribonuclease HII from Natranaerobius thermophilus (strain ATCC BAA-1301 / DSM 18059 / JW/NM-WN-LF).